The sequence spans 500 residues: Protein adenylyltransferase Fic (500 aa).

A helical membrane pass occupies residues 39 to 59 (LSFLIFFVIGSLFSGLMFALL). TPR repeat units lie at residues 122 to 155 (ALSS…SPRH) and 156 to 190 (PEIL…NPSH). Residues 247–252 (SVGIEG) carry the Inhibitory (S/T)XXXE(G/N) motif motif. ATP contacts are provided by residues Glu-251 and 333 to 336 (VGGH). One can recognise a Fido domain in the interval 302–437 (ITLKDLLEIH…IRPFVRFIAD (136 aa)). Residue His-380 is part of the active site. ATP is bound by residues 384-391 (DGNGRTSR), 416-417 (YY), and Asn-424. The disordered stretch occupies residues 477–500 (GREGGSTVHEGSGTGDSIRIGTMW).

This sequence belongs to the fic family. As to quaternary structure, homodimer.

The protein localises to the membrane. The catalysed reaction is L-tyrosyl-[protein] + ATP = O-(5'-adenylyl)-L-tyrosyl-[protein] + diphosphate. It carries out the reaction L-threonyl-[protein] + ATP = 3-O-(5'-adenylyl)-L-threonyl-[protein] + diphosphate. It catalyses the reaction 3-O-(5'-adenylyl)-L-threonyl-[protein] + H2O = L-threonyl-[protein] + AMP + H(+). Its activity is regulated as follows. The side chain of Glu-251 determines which of the two opposing activities (AMPylase or de-AMPylase) will take place. In response to endoplasmic reticulum stress, mediates de-AMPylase activity. Adenylyltransferase activity is inhibited by the inhibitory helix present at the N-terminus: Glu-251 binds ATP and competes with ATP-binding at Arg-391, thereby preventing adenylyltransferase activity. In unstressed cells, disengagement of Glu-251 promotes adenylyltransferase activity. Activation dissociates ATP-binding from Glu-251, allowing ordered binding of the entire ATP moiety with the alpha-phosphate in an orientation that is productive for accepting an incoming target hydroxyl side chain. Its function is as follows. Protein that can both mediate the addition of adenosine 5'-monophosphate (AMP) to specific residues of target proteins (AMPylation), and the removal of the same modification from target proteins (de-AMPylation), depending on the context. The side chain of Glu-251 determines which of the two opposing activities (AMPylase or de-AMPylase) will take place. Acts as a key regulator of the unfolded protein response (UPR) by mediating AMPylation or de-AMPylation of Hsc70-3/BiP. In unstressed cells, acts as an adenylyltransferase by mediating AMPylation of Hsc70-3/BiP at 'Thr-518', thereby inactivating it. In response to endoplasmic reticulum stress, acts as a phosphodiesterase by mediating removal of ATP (de-AMPylation) from Hsc70-3/BiP at 'Thr-518', leading to restore HSPA5/BiP activity. In Culex quinquefasciatus (Southern house mosquito), this protein is Protein adenylyltransferase Fic.